The primary structure comprises 218 residues: Pyridoxine/pyridoxamine 5'-phosphate oxidase (218 aa).

Substrate is bound by residues 11–14 and Lys75; that span reads RVEY. FMN is bound by residues 70–75, 85–86, Lys92, and Gln114; these read RTVLCK and YT. Residues Tyr132, Arg136, and Ser140 each contribute to the substrate site. Residues 149 to 150 and Trp195 contribute to the FMN site; that span reads QS. Position 201 to 203 (201 to 203) interacts with substrate; it reads RVH. Arg205 is an FMN binding site.

It belongs to the pyridoxamine 5'-phosphate oxidase family. In terms of assembly, homodimer. Requires FMN as cofactor.

The catalysed reaction is pyridoxamine 5'-phosphate + O2 + H2O = pyridoxal 5'-phosphate + H2O2 + NH4(+). It catalyses the reaction pyridoxine 5'-phosphate + O2 = pyridoxal 5'-phosphate + H2O2. It functions in the pathway cofactor metabolism; pyridoxal 5'-phosphate salvage; pyridoxal 5'-phosphate from pyridoxamine 5'-phosphate: step 1/1. The protein operates within cofactor metabolism; pyridoxal 5'-phosphate salvage; pyridoxal 5'-phosphate from pyridoxine 5'-phosphate: step 1/1. In terms of biological role, catalyzes the oxidation of either pyridoxine 5'-phosphate (PNP) or pyridoxamine 5'-phosphate (PMP) into pyridoxal 5'-phosphate (PLP). The polypeptide is Pyridoxine/pyridoxamine 5'-phosphate oxidase (Mycolicibacterium gilvum (strain PYR-GCK) (Mycobacterium gilvum (strain PYR-GCK))).